The following is a 444-amino-acid chain: Histidinol dehydrogenase (444 aa).

Tyr135, Gln199, and Asn227 together coordinate NAD(+). The substrate site is built by Thr250, Gln272, and His275. Positions 272 and 275 each coordinate Zn(2+). Catalysis depends on proton acceptor residues Glu341 and His342. Substrate-binding residues include His342, Asp375, Glu429, and His434. Zn(2+) is bound at residue Asp375. His434 is a Zn(2+) binding site.

The protein belongs to the histidinol dehydrogenase family. Zn(2+) is required as a cofactor.

The catalysed reaction is L-histidinol + 2 NAD(+) + H2O = L-histidine + 2 NADH + 3 H(+). The protein operates within amino-acid biosynthesis; L-histidine biosynthesis; L-histidine from 5-phospho-alpha-D-ribose 1-diphosphate: step 9/9. Its function is as follows. Catalyzes the sequential NAD-dependent oxidations of L-histidinol to L-histidinaldehyde and then to L-histidine. This Mycobacterium bovis (strain ATCC BAA-935 / AF2122/97) protein is Histidinol dehydrogenase (hisD).